An 81-amino-acid polypeptide reads, in one-letter code: Protein Vpu (81 aa).

The Extracellular portion of the chain corresponds to 1–7; sequence MQPLVII. A helical transmembrane segment spans residues 8-28; sequence AIAALVVAIIIAIVVWTIVYI. The Cytoplasmic segment spans residues 29–81; that stretch reads EYRRIKRQRKIDCLIDRIRERAEDSGNESEGEREELSKLVEMGHHAPWDVDDL. Residues 50–81 are disordered; the sequence is AEDSGNESEGEREELSKLVEMGHHAPWDVDDL. A phosphoserine; by host CK2 mark is found at serine 53 and serine 57. Basic and acidic residues predominate over residues 62 to 81; it reads EELSKLVEMGHHAPWDVDDL.

This sequence belongs to the HIV-1 VPU protein family. As to quaternary structure, homopentamer. Interacts with host CD4 and BRTC; these interactions induce proteasomal degradation of CD4. Interacts with host BST2; this interaction leads to the degradation of host BST2. Interacts with host FBXW11. Interacts with host AP1M1; this interaction plays a role in the mistrafficking and subsequent degradation of host BST2. Interacts with host RANBP2; this interaction allows Vpu to down-regulate host BLM sumoylation. Post-translationally, phosphorylated by host CK2. This phosphorylation is necessary for interaction with human BTRC and degradation of CD4.

The protein resides in the host membrane. With respect to regulation, ion channel activity is inhibited by hexamethylene amiloride in vitro. Enhances virion budding by targeting host CD4 and Tetherin/BST2 to proteasome degradation. Degradation of CD4 prevents any unwanted premature interactions between viral Env and its host receptor CD4 in the endoplasmic reticulum. Degradation of antiretroviral protein Tetherin/BST2 is important for virion budding, as BST2 tethers new viral particles to the host cell membrane. Mechanistically, Vpu bridges either CD4 or BST2 to BTRC, a substrate recognition subunit of the Skp1/Cullin/F-box protein E3 ubiquitin ligase, induces their ubiquitination and subsequent proteasomal degradation. The alteration of the E3 ligase specificity by Vpu seems to promote the degradation of host IKBKB, leading to NF-kappa-B down-regulation and subsequent apoptosis. Acts as a viroporin that forms an oligomeric ion channel in membranes. Modulates the host DNA repair mechanisms to promote degradation of nuclear viral cDNA in cells that are already productively infected in order to suppress immune sensing and proviral hyper-integration (superinfection). Manipulates PML-NBs and modulates SUMOylation of host BLM protein thereby enhancing its DNA-end processing activity toward viral unintegrated linear DNA. Also inhibits RAD52-mediated homologous repair of viral cDNA, preventing the generation of dead-end circular forms of single copies of the long terminal repeat and permitting sustained nucleolytic attack. The polypeptide is Protein Vpu (Human immunodeficiency virus type 1 group M subtype D (isolate NDK) (HIV-1)).